A 528-amino-acid chain; its full sequence is GMP synthase [glutamine-hydrolyzing] (528 aa).

In terms of domain architecture, Glutamine amidotransferase type-1 spans 22–212; that stretch reads AILVLDFGSQ…VFKICQSQTN (191 aa). C99 serves as the catalytic Nucleophile. Active-site residues include H186 and E188. The GMPS ATP-PPase domain occupies 213–403; that stretch reads WSLESNVETI…LGIKKEALYR (191 aa). 240–246 serves as a coordination point for ATP; it reads SGGTDSL.

In terms of assembly, homodimer.

The enzyme catalyses XMP + L-glutamine + ATP + H2O = GMP + L-glutamate + AMP + diphosphate + 2 H(+). Its pathway is purine metabolism; GMP biosynthesis; GMP from XMP (L-Gln route): step 1/1. Catalyzes the synthesis of GMP from XMP. In Borrelia garinii subsp. bavariensis (strain ATCC BAA-2496 / DSM 23469 / PBi) (Borreliella bavariensis), this protein is GMP synthase [glutamine-hydrolyzing].